Consider the following 969-residue polypeptide: Leucine--tRNA ligase (969 aa).

The tract at residues 1–23 (MTESPTTSPATGSGAAAPDSDAP) is disordered. Residues 78-89 (PYPSGEGLHVGH) carry the 'HIGH' region motif. Positions 737–741 (KIGKS) match the 'KMSKS' region motif. K740 contributes to the ATP binding site.

This sequence belongs to the class-I aminoacyl-tRNA synthetase family.

It localises to the cytoplasm. The enzyme catalyses tRNA(Leu) + L-leucine + ATP = L-leucyl-tRNA(Leu) + AMP + diphosphate. The chain is Leucine--tRNA ligase from Mycobacterium avium (strain 104).